The sequence spans 116 residues: Photosystem II assembly factor Psb28 protein (116 aa).

It belongs to the Psb28 family. In terms of assembly, part of a photosystem II (PSII) assembly intermediate complex PSII-I; crystallized from a strain deleted of psbJ, it forms monomeric PSII before addition of the oxygen evolving complex. PSII-I includes 3 assembly factors not found in mature PSII (Psb27, Psb28 and Psb34). This protein binds to the cytoplasmic face of D1 and D2 (psbA and psbD), contacting CP47 (psbB) directly above the quinone b-binding site.

It localises to the cellular thylakoid membrane. Functionally, a photosystem II (PSII) assembly factor that binds PSII during biogenesis, protecting the complex until water splitting is activated. This Thermosynechococcus vestitus (strain NIES-2133 / IAM M-273 / BP-1) protein is Photosystem II assembly factor Psb28 protein.